We begin with the raw amino-acid sequence, 424 residues long: MIRIDLKQDEMPDHWYNILPDLPEELPTPRDETGEAFDTLKKAVPAKVLEYEFSGERYPKIPDEILERYMQVGRPTPIIRAKKLEELLGGNLKIFLKMESYTYSGSHKINSALAHVFFAREEGAKFVSTETGAGQWGSAVALASALFHMESHIFMVRTSFYAKPYRKYMMYMYGAHPHPSPSEFTEYGREVLKRMPDTPGSLGLAISEAIHYALDNGGKYIAGSVINSDILFKTIAGMEAKKQMEMAGEDPDYIVGVVGGGSNYAALAFPFLADELSSGKIRRTYIASGSKEVPKMTEGEYRYDYPDTGKVLPLLKMYTIGYDFIPPAVYAGGLRYHAVAPTLSLLMNKGIVSARDYDQEEAFKWARIFSETEGYIPAPETSHALPILKEIADKNRGEKKTVLVSFSGHGLLDLGNYAEALHFE.

Lysine 108 is subject to N6-(pyridoxal phosphate)lysine.

This sequence belongs to the TrpB family. Tetramer of two alpha and two beta chains. Pyridoxal 5'-phosphate serves as cofactor.

The catalysed reaction is (1S,2R)-1-C-(indol-3-yl)glycerol 3-phosphate + L-serine = D-glyceraldehyde 3-phosphate + L-tryptophan + H2O. Its pathway is amino-acid biosynthesis; L-tryptophan biosynthesis; L-tryptophan from chorismate: step 5/5. The beta subunit is responsible for the synthesis of L-tryptophan from indole and L-serine. The chain is Tryptophan synthase beta chain (trpB) from Thermoplasma acidophilum (strain ATCC 25905 / DSM 1728 / JCM 9062 / NBRC 15155 / AMRC-C165).